The primary structure comprises 382 residues: tRNA-specific 2-thiouridylase MnmA (382 aa).

Residues 18–25 and Leu44 each bind ATP; that span reads AMSGGVDS. Cys112 functions as the Nucleophile in the catalytic mechanism. Cys112 and Cys209 form a disulfide bridge. Gly136 contacts ATP. Residues 159–161 form an interaction with tRNA region; that stretch reads RDQ. Catalysis depends on Cys209, which acts as the Cysteine persulfide intermediate.

This sequence belongs to the MnmA/TRMU family.

The protein localises to the cytoplasm. The catalysed reaction is S-sulfanyl-L-cysteinyl-[protein] + uridine(34) in tRNA + AH2 + ATP = 2-thiouridine(34) in tRNA + L-cysteinyl-[protein] + A + AMP + diphosphate + H(+). In terms of biological role, catalyzes the 2-thiolation of uridine at the wobble position (U34) of tRNA, leading to the formation of s(2)U34. This chain is tRNA-specific 2-thiouridylase MnmA, found in Methylobacterium sp. (strain 4-46).